Here is a 229-residue protein sequence, read N- to C-terminus: Adenylate kinase (229 aa).

Residue 10-15 (GSGKGT) participates in ATP binding. The tract at residues 30–59 (ESGVIFREHISKGTELGKQAKSYIDKGELV) is NMP. AMP is bound by residues Ser-31, Arg-36, 57–59 (ELV), 84–87 (GFPR), and Gln-91. Residues 125 to 164 (GRRICKTNNNHPNNVSIDSIKPDGNNCRVCHGELIVRTDD) form an LID region. Arg-126 lines the ATP pocket. Positions 161 and 173 each coordinate AMP. Asn-209 provides a ligand contact to ATP.

Belongs to the adenylate kinase family. Monomer.

It localises to the cytoplasm. It carries out the reaction AMP + ATP = 2 ADP. It functions in the pathway purine metabolism; AMP biosynthesis via salvage pathway; AMP from ADP: step 1/1. Its function is as follows. Catalyzes the reversible transfer of the terminal phosphate group between ATP and AMP. Plays an important role in cellular energy homeostasis and in adenine nucleotide metabolism. In Lawsonia intracellularis (strain PHE/MN1-00), this protein is Adenylate kinase.